We begin with the raw amino-acid sequence, 403 residues long: Probable tRNA sulfurtransferase (403 aa).

The 106-residue stretch at 60-165 folds into the THUMP domain; that stretch reads QLAEERLKPI…KEGVFLSCRT (106 aa). ATP is bound by residues 183-184, 208-209, arginine 265, glycine 287, and glutamine 296; these read ML and HF.

Belongs to the ThiI family.

It is found in the cytoplasm. The enzyme catalyses [ThiI sulfur-carrier protein]-S-sulfanyl-L-cysteine + a uridine in tRNA + 2 reduced [2Fe-2S]-[ferredoxin] + ATP + H(+) = [ThiI sulfur-carrier protein]-L-cysteine + a 4-thiouridine in tRNA + 2 oxidized [2Fe-2S]-[ferredoxin] + AMP + diphosphate. It catalyses the reaction [ThiS sulfur-carrier protein]-C-terminal Gly-Gly-AMP + S-sulfanyl-L-cysteinyl-[cysteine desulfurase] + AH2 = [ThiS sulfur-carrier protein]-C-terminal-Gly-aminoethanethioate + L-cysteinyl-[cysteine desulfurase] + A + AMP + 2 H(+). It participates in cofactor biosynthesis; thiamine diphosphate biosynthesis. Its function is as follows. Catalyzes the ATP-dependent transfer of a sulfur to tRNA to produce 4-thiouridine in position 8 of tRNAs, which functions as a near-UV photosensor. Also catalyzes the transfer of sulfur to the sulfur carrier protein ThiS, forming ThiS-thiocarboxylate. This is a step in the synthesis of thiazole, in the thiamine biosynthesis pathway. The sulfur is donated as persulfide by IscS. The polypeptide is Probable tRNA sulfurtransferase (Listeria innocua serovar 6a (strain ATCC BAA-680 / CLIP 11262)).